The chain runs to 332 residues: Holliday junction branch migration complex subunit RuvB (332 aa).

The tract at residues 1–181 (MARILDNNVM…FGITGHMEYY (181 aa)) is large ATPase domain (RuvB-L). ATP is bound by residues Leu-20, Arg-21, Gly-62, Lys-65, Thr-66, Thr-67, 128 to 130 (EDF), Arg-171, Tyr-181, and Arg-218. Residue Thr-66 coordinates Mg(2+). The tract at residues 182 to 252 (QEKDLTEIVE…ITDRALTMLD (71 aa)) is small ATPAse domain (RuvB-S). The tract at residues 255–332 (REGLDYIDQK…RHLGYPYQNT (78 aa)) is head domain (RuvB-H). 4 residues coordinate DNA: Arg-291, Arg-310, Arg-312, and Arg-315.

It belongs to the RuvB family. In terms of assembly, homohexamer. Forms an RuvA(8)-RuvB(12)-Holliday junction (HJ) complex. HJ DNA is sandwiched between 2 RuvA tetramers; dsDNA enters through RuvA and exits via RuvB. An RuvB hexamer assembles on each DNA strand where it exits the tetramer. Each RuvB hexamer is contacted by two RuvA subunits (via domain III) on 2 adjacent RuvB subunits; this complex drives branch migration. In the full resolvosome a probable DNA-RuvA(4)-RuvB(12)-RuvC(2) complex forms which resolves the HJ.

It is found in the cytoplasm. The enzyme catalyses ATP + H2O = ADP + phosphate + H(+). Functionally, the RuvA-RuvB-RuvC complex processes Holliday junction (HJ) DNA during genetic recombination and DNA repair, while the RuvA-RuvB complex plays an important role in the rescue of blocked DNA replication forks via replication fork reversal (RFR). RuvA specifically binds to HJ cruciform DNA, conferring on it an open structure. The RuvB hexamer acts as an ATP-dependent pump, pulling dsDNA into and through the RuvAB complex. RuvB forms 2 homohexamers on either side of HJ DNA bound by 1 or 2 RuvA tetramers; 4 subunits per hexamer contact DNA at a time. Coordinated motions by a converter formed by DNA-disengaged RuvB subunits stimulates ATP hydrolysis and nucleotide exchange. Immobilization of the converter enables RuvB to convert the ATP-contained energy into a lever motion, pulling 2 nucleotides of DNA out of the RuvA tetramer per ATP hydrolyzed, thus driving DNA branch migration. The RuvB motors rotate together with the DNA substrate, which together with the progressing nucleotide cycle form the mechanistic basis for DNA recombination by continuous HJ branch migration. Branch migration allows RuvC to scan DNA until it finds its consensus sequence, where it cleaves and resolves cruciform DNA. In Streptococcus pyogenes serotype M1, this protein is Holliday junction branch migration complex subunit RuvB.